A 152-amino-acid chain; its full sequence is Snaclec coagulation factor IX/factor X-binding protein subunit A (152 aa).

A signal peptide spans 1–23; that stretch reads MGRFIFLSFGLLVVFLSLSGTGA. Intrachain disulfides connect cysteine 25–cysteine 36, cysteine 53–cysteine 150, and cysteine 125–cysteine 142. The 120-residue stretch at 32–151 folds into the C-type lectin domain; it reads YEGHCYNIFH…CGERNPFVCE (120 aa). Residues serine 64, glutamate 66, and glutamate 70 each contribute to the Ca(2+) site. Glutamate 151 is a binding site for Ca(2+).

This sequence belongs to the snaclec family. As to quaternary structure, heterodimer of subunits A and B; disulfide-linked. As to expression, expressed by the venom gland.

The protein localises to the secreted. Its function is as follows. Anticoagulant protein which binds to the gamma-carboxyglutamic acid-domain regions of factors IX (F9) and factor X (F10) in the presence of calcium with a 1 to 1 stoichiometry. In Gloydius halys (Chinese water mocassin), this protein is Snaclec coagulation factor IX/factor X-binding protein subunit A.